The following is a 564-amino-acid chain: Keratin, type II cytoskeletal 6C (564 aa).

Residues 1–11 (MASTSTTIRSH) show a composition bias toward low complexity. Residues 1-23 (MASTSTTIRSHSSSRRGFSANSA) form a disordered region. An N-acetylalanine modification is found at A2. The tract at residues 2–162 (ASTSTTIRSH…DPAIQRVRAE (161 aa)) is head. The residue at position 60 (S60) is a Phosphoserine. Residues 163–198 (EREQIKTLNNKFASFIDKVRFLEQQNKVLDTKWTLL) are coil 1A. Residues 163 to 476 (EREQIKTLNN…KLLEGEECRL (314 aa)) form the IF rod domain. A linker 1 region spans residues 199-217 (QEQGTKTVRQNLEPLFEQY). Residues 218–309 (INNLRRQLDS…ALYDAELSQM (92 aa)) are coil 1B. The linker 12 stretch occupies residues 310 to 333 (QTHISDTSVVLSMDNNRNLDLDSI). Residues 334 to 472 (IAEVKAQYEE…ATYRKLLEGE (139 aa)) are coil 2. Positions 473 to 564 (ECRLNGEGVG…SSSSRKSYKH (92 aa)) are tail.

The protein belongs to the intermediate filament family. In terms of assembly, heterodimer of a type I and a type II keratin. KRT6 isomers associate with KRT16 and/or KRT17. As to expression, constitutively expressed in distinct types of epithelia such as those in oral mucosa, esophagus, papillae of tongue and hair follicle outer root sheath.

This is Keratin, type II cytoskeletal 6C (KRT6C) from Homo sapiens (Human).